The sequence spans 433 residues: Zinc finger and SCAN domain-containing protein 4 (433 aa).

The 83-residue stretch at 44–126 folds into the SCAN box domain; the sequence is RMVLNSFQDS…RFIEDLTDDS (83 aa). 3 stretches are compositionally biased toward polar residues: residues 165 to 185, 195 to 210, and 277 to 299; these read TTREANMGTPSQTSQDTSLET, GWNSSSKTTRVNENIT, and QPEQSSPESALTHQSNEGNSTCE. Disordered stretches follow at residues 165–210 and 275–301; these read TTRE…ENIT and ISQPEQSSPESALTHQSNEGNSTCEVH. 4 consecutive C2H2-type zinc fingers follow at residues 312–334, 340–362, 368–390, and 396–418; these read YKCEECPKVFKYLCHLLAHQRRH, FVCPECQKGFFQISDLRVHQIIH, FTCSMCKKSFSHKTNLRSHERIH, and YTCPFCKTSYRQSSTYHRHMRTH.

It localises to the nucleus. The protein localises to the chromosome. The protein resides in the telomere. Embryonic stem (ES) cell-specific transcription factor required to regulate ES cell pluripotency. Binds telomeres and plays a key role in genomic stability in ES cells by regulating telomere elongation. Acts as an activator of spontaneous telomere sister chromatid exchange (T-SCE) and telomere elongation in undifferentiated ES cells. The sequence is that of Zinc finger and SCAN domain-containing protein 4 (ZSCAN4) from Homo sapiens (Human).